The primary structure comprises 719 residues: Eukaryotic translation initiation factor 3 subunit B (719 aa).

In terms of domain architecture, RRM spans 60–147 (NILVVDNLPV…HIFAVNMFDD (88 aa)). WD repeat units lie at residues 167–207 (VPGE…KPEL), 511–553 (LKGK…TMAS), and 555–598 (EHFM…LYRI). The segment covering 675-686 (EKMERQKLRDGE) has biased composition (basic and acidic residues). Residues 675–698 (EKMERQKLRDGEASDEEEEYEAKE) are disordered. Over residues 687–698 (ASDEEEEYEAKE) the composition is skewed to acidic residues.

The protein belongs to the eIF-3 subunit B family. Component of the eukaryotic translation initiation factor 3 (eIF-3) complex.

It localises to the cytoplasm. Its function is as follows. RNA-binding component of the eukaryotic translation initiation factor 3 (eIF-3) complex, which is involved in protein synthesis of a specialized repertoire of mRNAs and, together with other initiation factors, stimulates binding of mRNA and methionyl-tRNAi to the 40S ribosome. The eIF-3 complex specifically targets and initiates translation of a subset of mRNAs involved in cell proliferation. The protein is Eukaryotic translation initiation factor 3 subunit B (TIF3B1) of Nicotiana tabacum (Common tobacco).